We begin with the raw amino-acid sequence, 235 residues long: Transcriptional regulatory protein MalR (235 aa).

The Response regulatory domain occupies 3–119 (NVLIVEDDPM…RFQTALSDYR (117 aa)). D54 bears the 4-aspartylphosphate mark. Positions 178 to 197 (TEDLAKHTEISQVSIRKYLK) form a DNA-binding region, H-T-H motif.

In terms of processing, phosphorylated and activated by MalK.

Its subcellular location is the cytoplasm. Functionally, member of a two-component regulatory system MalK/MalR. Activates transcription of maeA, maeN and yflS in presence of malate by binding to their promoter region. The sequence is that of Transcriptional regulatory protein MalR (malR) from Bacillus subtilis (strain 168).